We begin with the raw amino-acid sequence, 229 residues long: Probable queuosine precursor transporter (229 aa).

The next 7 helical transmembrane spans lie at 6 to 26 (FWIFFAIIHFIIVLLFYKGFG), 28 to 48 (MGLFVWIGFATVCANLQVVKT), 49 to 69 (VELFGLTATLGNVMYGTIFFA), 86 to 106 (VWLGFSTLLTLTFVMQGVLLF), 118 to 138 (LETIFGFLPRVALGSLLAFIF), 160 to 182 (LWLRNGGSTAVSQLFDTFIFTAV), and 192 to 214 (VWLHIFISTYLIKFAVSLISLPY).

This sequence belongs to the vitamin uptake transporter (VUT/ECF) (TC 2.A.88) family. Q precursor transporter subfamily.

It localises to the cell membrane. Its function is as follows. Involved in the import of queuosine (Q) precursors, required for Q precursor salvage. The protein is Probable queuosine precursor transporter (ypdP) of Bacillus subtilis (strain 168).